Here is a 247-residue protein sequence, read N- to C-terminus: Flavin-dependent thymidylate synthase (247 aa).

The ThyX domain maps to 1-237; that stretch reads MRVRLLEATE…PHTFEYYDAE (237 aa). DUMP contacts are provided by residues 85–88, 98–100, and Arg-176; these read QLTR and SMR. 88-90 contacts FAD; it reads RHR. Positions 88–98 match the ThyX motif motif; the sequence is RHRHASFDVQS. Residues 192-194 and His-198 contribute to the FAD site; that span reads NPR. DUMP is bound at residue Arg-203. Catalysis depends on Arg-203, which acts as the Involved in ionization of N3 of dUMP, leading to its activation.

It belongs to the thymidylate synthase ThyX family. As to quaternary structure, homotetramer. FAD is required as a cofactor.

The catalysed reaction is dUMP + (6R)-5,10-methylene-5,6,7,8-tetrahydrofolate + NADPH + H(+) = dTMP + (6S)-5,6,7,8-tetrahydrofolate + NADP(+). The protein operates within pyrimidine metabolism; dTTP biosynthesis. Catalyzes the reductive methylation of 2'-deoxyuridine-5'-monophosphate (dUMP) to 2'-deoxythymidine-5'-monophosphate (dTMP) while utilizing 5,10-methylenetetrahydrofolate (mTHF) as the methyl donor, and NADPH and FADH(2) as the reductant. The polypeptide is Flavin-dependent thymidylate synthase (Halobacterium salinarum (strain ATCC 700922 / JCM 11081 / NRC-1) (Halobacterium halobium)).